Here is a 74-residue protein sequence, read N- to C-terminus: DNA-directed RNA polymerase subunit omega (74 aa).

This sequence belongs to the RNA polymerase subunit omega family. In terms of assembly, the RNAP catalytic core consists of 2 alpha, 1 beta, 1 beta' and 1 omega subunit. When a sigma factor is associated with the core the holoenzyme is formed, which can initiate transcription.

It catalyses the reaction RNA(n) + a ribonucleoside 5'-triphosphate = RNA(n+1) + diphosphate. Functionally, promotes RNA polymerase assembly. Latches the N- and C-terminal regions of the beta' subunit thereby facilitating its interaction with the beta and alpha subunits. In Hydrogenovibrio crunogenus (strain DSM 25203 / XCL-2) (Thiomicrospira crunogena), this protein is DNA-directed RNA polymerase subunit omega.